Consider the following 193-residue polypeptide: Frataxin, mitochondrial (193 aa).

The N-terminal 72 residues, 1–72, are a transit peptide targeting the mitochondrion; it reads MIFNFLNKAS…KQQQQLSKSF (72 aa).

The protein belongs to the frataxin family. Monomer. Oligomer.

It localises to the mitochondrion. It catalyses the reaction 4 Fe(2+) + O2 + 4 H(+) = 4 Fe(3+) + 2 H2O. Promotes the biosynthesis of heme as well as the assembly and repair of iron-sulfur clusters by delivering Fe(2+) to proteins involved in these pathways. May play a role in the protection against iron-catalyzed oxidative stress through its ability to catalyze the oxidation of Fe(2+) to Fe(3+). May be able to store large amounts of the metal in the form of a ferrihydrite mineral by oligomerization. The polypeptide is Frataxin, mitochondrial (fxn) (Dictyostelium discoideum (Social amoeba)).